Reading from the N-terminus, the 102-residue chain is NADH-quinone oxidoreductase subunit K (102 aa).

3 helical membrane passes run 2-22, 26-46, and 58-78; these read LDFY…GVIL, IFTI…IFAT, and VIVM…LALI.

This sequence belongs to the complex I subunit 4L family. In terms of assembly, NDH-1 is composed of 14 different subunits. Subunits NuoA, H, J, K, L, M, N constitute the membrane sector of the complex.

It localises to the cell inner membrane. The enzyme catalyses a quinone + NADH + 5 H(+)(in) = a quinol + NAD(+) + 4 H(+)(out). In terms of biological role, NDH-1 shuttles electrons from NADH, via FMN and iron-sulfur (Fe-S) centers, to quinones in the respiratory chain. The immediate electron acceptor for the enzyme in this species is believed to be ubiquinone. Couples the redox reaction to proton translocation (for every two electrons transferred, four hydrogen ions are translocated across the cytoplasmic membrane), and thus conserves the redox energy in a proton gradient. The chain is NADH-quinone oxidoreductase subunit K from Campylobacter fetus subsp. fetus (strain 82-40).